We begin with the raw amino-acid sequence, 375 residues long: Palmitoyltransferase PFA4 (375 aa).

The Cytoplasmic portion of the chain corresponds to 1-9 (MAVLVKWPW). A helical membrane pass occupies residues 10–30 (LGVAIPCFLISFTGYFAHFFV). The Lumenal portion of the chain corresponds to 31–33 (LTN). A helical membrane pass occupies residues 34-54 (FLSFKELLWFQVSLSMIWISY). The Cytoplasmic portion of the chain corresponds to 55-121 (WKAIYKNPGR…MNCVGYKNFP (67 aa)). One can recognise a DHHC domain in the interval 78–128 (NYCTKCETYKPERTHHCKRCNQCVLVMDHHCPWTMNCVGYKNFPHFIRFLF). Catalysis depends on Cys-108, which acts as the S-palmitoyl cysteine intermediate. Residues 122 to 142 (HFIRFLFWIIATTGILLHYFV) form a helical membrane-spanning segment. At 143–164 (KRIKFTWVNRYATANLVSKQEL) the chain is on the lumenal side. Residues 165–185 (IFLTILTPLDAFILLTISLLF) traverse the membrane as a helical segment. The Cytoplasmic portion of the chain corresponds to 186 to 375 (VRCVKNQIVN…EHFGVDVEVE (190 aa)).

This sequence belongs to the DHHC palmitoyltransferase family. PFA4 subfamily.

The protein localises to the endoplasmic reticulum membrane. It catalyses the reaction L-cysteinyl-[protein] + hexadecanoyl-CoA = S-hexadecanoyl-L-cysteinyl-[protein] + CoA. Functionally, mediates the reversible addition of palmitate to target proteins, thereby regulating their membrane association and biological function. This is Palmitoyltransferase PFA4 from Eremothecium gossypii (strain ATCC 10895 / CBS 109.51 / FGSC 9923 / NRRL Y-1056) (Yeast).